The sequence spans 475 residues: tRNA modification GTPase MnmE (475 aa).

(6S)-5-formyl-5,6,7,8-tetrahydrofolate-binding residues include R24, E81, and K124. One can recognise a TrmE-type G domain in the interval 220–397 (GLSVVLAGQP…MRSELLRLIG (178 aa)). A K(+)-binding site is contributed by N230. GTP contacts are provided by residues 230-235 (NVGKSS), 249-255 (TPIAGTT), 274-277 (DTAG), and 378-380 (SAR). S234 provides a ligand contact to Mg(2+). The K(+) site is built by T249, I251, and T254. Position 255 (T255) interacts with Mg(2+). Position 475 (K475) interacts with (6S)-5-formyl-5,6,7,8-tetrahydrofolate.

This sequence belongs to the TRAFAC class TrmE-Era-EngA-EngB-Septin-like GTPase superfamily. TrmE GTPase family. Homodimer. Heterotetramer of two MnmE and two MnmG subunits. Requires K(+) as cofactor.

It is found in the cytoplasm. Functionally, exhibits a very high intrinsic GTPase hydrolysis rate. Involved in the addition of a carboxymethylaminomethyl (cmnm) group at the wobble position (U34) of certain tRNAs, forming tRNA-cmnm(5)s(2)U34. The protein is tRNA modification GTPase MnmE of Cupriavidus metallidurans (strain ATCC 43123 / DSM 2839 / NBRC 102507 / CH34) (Ralstonia metallidurans).